A 185-amino-acid polypeptide reads, in one-letter code: NEDD8-conjugating enzyme UBE2F (185 aa).

Met1 bears the N-acetylmethionine mark. The segment at 1-29 (MLTLASKLKRDDGLKGSRTAATASDSTRR) is interaction with UBA3. The region spanning 32-185 (VRDKLLVKEV…VDDYIKRYAR (154 aa)) is the UBC core domain. The Glycyl thioester intermediate role is filled by Cys116.

It belongs to the ubiquitin-conjugating enzyme family. UBE2F subfamily. In terms of assembly, interacts with UBA3 and RBX2. Interacts (N-terminally acetylated form) with (via DCUN1 domain) DCUN1D1, DCUN1D2, DCUN1D3, DCUN1D4 and DCUN1D5. Post-translationally, the acetylation of Met-1 increases affinity for DCUN1D3 by about 2 orders of magnitude and is crucial for NEDD8 transfer to cullins. In terms of tissue distribution, widely expressed (at protein level).

It carries out the reaction [E1 NEDD8-activating enzyme]-S-[NEDD8 protein]-yl-L-cysteine + [E2 NEDD8-conjugating enzyme]-L-cysteine = [E1 NEDD8-activating enzyme]-L-cysteine + [E2 NEDD8-conjugating enzyme]-S-[NEDD8-protein]-yl-L-cysteine.. It participates in protein modification; protein neddylation. In terms of biological role, accepts the ubiquitin-like protein NEDD8 from the UBA3-NAE1 E1 complex and catalyzes its covalent attachment to other proteins. Together with the E3 ubiquitin ligase RNF7/RBX2, specifically neddylates cullin-5 (CUL5). Does not neddylate CUL1, CUL2, CUL3, CUL4A or CUL4B. Mediates neddylation of the CUL9-RBX1 complex. (Microbial infection) Following infection by HIV-1 virus, participates to HIV-1 Vif protein-mediated ubiquitination and degradation of APOBEC3G by mediating neddylation of cullin-5 (CUL5). In Homo sapiens (Human), this protein is NEDD8-conjugating enzyme UBE2F (UBE2F).